Consider the following 165-residue polypeptide: Phosphopantetheine adenylyltransferase (165 aa).

T10 contributes to the substrate binding site. ATP is bound by residues 10–11 and H18; that span reads TF. Substrate contacts are provided by K42, L75, and R89. ATP is bound by residues 90–92, E100, and 125–131; these read GVR and VSFISSS.

This sequence belongs to the bacterial CoaD family. Homohexamer. Mg(2+) serves as cofactor.

The protein resides in the cytoplasm. It carries out the reaction (R)-4'-phosphopantetheine + ATP + H(+) = 3'-dephospho-CoA + diphosphate. The protein operates within cofactor biosynthesis; coenzyme A biosynthesis; CoA from (R)-pantothenate: step 4/5. Reversibly transfers an adenylyl group from ATP to 4'-phosphopantetheine, yielding dephospho-CoA (dPCoA) and pyrophosphate. This chain is Phosphopantetheine adenylyltransferase, found in Buchnera aphidicola subsp. Schizaphis graminum (strain Sg).